A 134-amino-acid chain; its full sequence is Replication enhancer protein (134 aa).

The protein belongs to the geminiviridae replication enhancer protein family. Homooligomer. Interacts with the replication-associated protein (REP). Interacts with host proliferating cell nuclear antigen (PCNA). Interacts with host retinoblastoma-related protein 1 (RBR1), and may thereby deregulate the host cell cycle. Oligomerization and interaction with PCNA are necessary for optimal replication enhancement.

Functionally, increases viral DNA accumulation. Enhances infectivity and symptom expression. This African cassava mosaic virus (isolate West Kenyan 844) (ACMV) protein is Replication enhancer protein.